A 451-amino-acid polypeptide reads, in one-letter code: Protein FAM117A (451 aa).

The span at 1–25 (MSGAAAGGRGGGSWGPGRGGAGGLR) shows a compositional bias: gly residues. Disordered stretches follow at residues 1–83 (MSGA…RPQP) and 164–183 (RTKLSRSGKEKERSCPVQGD). 2 positions are modified to phosphoserine: Ser29 and Ser67. The stretch at 149-175 (TDHRKEITKLKQQLQRTKLSRSGKEKE) forms a coiled coil. Phosphoserine is present on residues Ser193 and Ser213. The interval 242–293 (DGHRAPAPPQNSSCDHSLLLEPGNLTSSPSVPLASPQPPSQASREEHQGATE) is disordered. A phosphoserine mark is found at Ser318 and Ser326. At Thr353 the chain carries Phosphothreonine. The tract at residues 403 to 451 (SPGSPLPTASPRAPRKGPEASKASSLPSEPWQRSPPSEESVLFQSSLVV) is disordered. Phosphoserine occurs at positions 412 and 426. Polar residues predominate over residues 436–451 (SPPSEESVLFQSSLVV).

The protein belongs to the FAM117 family.

In Mus musculus (Mouse), this protein is Protein FAM117A (Fam117a).